Here is a 310-residue protein sequence, read N- to C-terminus: MNALTAVQNNAVDSGQDYSGFTLIPSAQSPRLLELTFTEQTTKQFLEQVAEWPVQALEYKSFLRFRVGKILDDLCANQLQPLLLKTLLNRAEGALLINAVGIDDVAQADEMVKLATAVAHLIGRSNFDAMSGQYYARFVVKNVDNSDSYLRQPHRVMELHNDGTYVEEITDYVLMMKIDDWEHLDHYFRHPLARRPMRFAAPPSKNVSKDVFHPVFDVDQQGRPVMRYIDQFVQPKDFEEGVWLSELSDAIETSKGILSVPVPVGKFLLINNLFWLHGRDRFTPHPDLRRELMRQRGYFAYATHHYQTHQ.

Residues H160, D162, and H277 each contribute to the Fe cation site.

The protein belongs to the glutarate hydroxylase family. In terms of assembly, homotetramer. The cofactor is Fe(2+).

It catalyses the reaction glutarate + 2-oxoglutarate + O2 = (S)-2-hydroxyglutarate + succinate + CO2. It participates in amino-acid degradation. Its function is as follows. Acts as an alpha-ketoglutarate-dependent dioxygenase catalyzing hydroxylation of glutarate (GA) to L-2-hydroxyglutarate (L2HG). Functions in a L-lysine degradation pathway that proceeds via cadaverine, glutarate and L-2-hydroxyglutarate. This is Glutarate 2-hydroxylase from Shigella flexneri.